The chain runs to 192 residues: Thymidine kinase (192 aa).

ATP is bound by residues 9–16 (GAMNSGKT) and 85–88 (DEAQ). The active-site Proton acceptor is glutamate 86. Cysteine 143, cysteine 146, cysteine 180, and histidine 183 together coordinate Zn(2+).

The protein belongs to the thymidine kinase family. As to quaternary structure, homotetramer.

It localises to the cytoplasm. The catalysed reaction is thymidine + ATP = dTMP + ADP + H(+). This Lactiplantibacillus plantarum (strain ATCC BAA-793 / NCIMB 8826 / WCFS1) (Lactobacillus plantarum) protein is Thymidine kinase.